A 449-amino-acid chain; its full sequence is Xylose isomerase (449 aa).

Catalysis depends on residues His-101 and Asp-104. Mg(2+)-binding residues include Glu-232, Glu-268, His-271, Asp-296, Asp-307, Asp-309, and Asp-340.

The protein belongs to the xylose isomerase family. In terms of assembly, homotetramer. Requires Mg(2+) as cofactor.

It is found in the cytoplasm. The enzyme catalyses alpha-D-xylose = alpha-D-xylulofuranose. This Bifidobacterium longum (strain DJO10A) protein is Xylose isomerase.